The primary structure comprises 267 residues: MIGTIRIFLVVAAMVALSLSLIPFQYLFLKLKNGWKRRLPNFFHRIVARLFGFRIRTVGKLHEGCPLLLVSNHTSWSDIVVLSAVGQVSFIAKSEVRDWPVFGMFAVLQRTVFVERARRGKTVHQTSEIANRLIAGDAMVLFAEGTTSDGNRVLPFKTALFGAAHAAIREAGVAEVAVQPVAIAYTRVHGMAMGRYFRPLVSWPGDVELMPHLKGILREGAIDVEVRFGEPVFVTAETDRKALARTMENRVRALLQSALLGREIPEA.

The chain crosses the membrane as a helical span at residues 7-27 (IFLVVAAMVALSLSLIPFQYL).

It belongs to the 1-acyl-sn-glycerol-3-phosphate acyltransferase family. OlsA subfamily.

Its subcellular location is the membrane. It carries out the reaction a lyso-ornithine lipid + a fatty acyl-[ACP] = an N(2)-[(3R)-3-(acyloxy)acyl]-L-ornithine lipid + holo-[ACP]. It functions in the pathway lipid metabolism. In terms of biological role, catalyzes the second step in the formation of ornithine lipids, which are phosphorus-free membrane lipids. Uses acyl-acyl carrier protein (acyl-AcpP) as an acyl donor and converts lyso-ornithine lipid (LOL) into ornithine lipid (OL). The sequence is that of Lyso-ornithine lipid O-acyltransferase from Brucella abortus (strain 2308).